The following is a 118-amino-acid chain: Ribonuclease P protein component (118 aa).

The protein belongs to the RnpA family. Consists of a catalytic RNA component (M1 or rnpB) and a protein subunit.

The enzyme catalyses Endonucleolytic cleavage of RNA, removing 5'-extranucleotides from tRNA precursor.. Functionally, RNaseP catalyzes the removal of the 5'-leader sequence from pre-tRNA to produce the mature 5'-terminus. It can also cleave other RNA substrates such as 4.5S RNA. The protein component plays an auxiliary but essential role in vivo by binding to the 5'-leader sequence and broadening the substrate specificity of the ribozyme. The polypeptide is Ribonuclease P protein component (Rickettsia conorii (strain ATCC VR-613 / Malish 7)).